The following is a 563-amino-acid chain: Pyruvate decarboxylase isozyme 1 (563 aa).

S2 carries the post-translational modification N-acetylserine. Positions 28, 115, and 157 each coordinate pyruvate. Residue R161 is modified to Omega-N-methylarginine. A Glycyl lysine isopeptide (Lys-Gly) (interchain with G-Cter in ubiquitin) cross-link involves residue K212. S223 bears the Phosphoserine mark. R224 serves as a coordination point for pyruvate. A Glycyl lysine isopeptide (Lys-Gly) (interchain with G-Cter in ubiquitin) cross-link involves residue K233. T266 carries the phosphothreonine modification. Glycyl lysine isopeptide (Lys-Gly) (interchain with G-Cter in ubiquitin) cross-links involve residues K269 and K332. T336 and T353 each carry phosphothreonine. Thiamine diphosphate is bound by residues T390 and 413–415; that span reads GSI. Mg(2+) is bound at residue D444. Residues 445 to 446 and 471 to 476 contribute to the thiamine diphosphate site; these read GS and NDGYTI. Residues N471 and G473 each contribute to the Mg(2+) site. E477 contributes to the pyruvate binding site. Glycyl lysine isopeptide (Lys-Gly) (interchain with G-Cter in ubiquitin) cross-links involve residues K484, K505, and K520. T522 carries the phosphothreonine modification. Position 526 is a phosphoserine (S526).

Belongs to the TPP enzyme family. In terms of assembly, homotetramer. Requires Mg(2+) as cofactor. It depends on thiamine diphosphate as a cofactor. Cleavage of N-terminal methionine and N-terminal acetylation by NAT1/ARD1.

The protein localises to the cytoplasm. It is found in the nucleus. The catalysed reaction is pyruvate + H(+) = acetaldehyde + CO2. It carries out the reaction 3-methyl-2-oxobutanoate + H(+) = 2-methylpropanal + CO2. It catalyses the reaction (S)-3-methyl-2-oxopentanoate + H(+) = 2-methylbutanal + CO2. The enzyme catalyses indole-3-pyruvate + H(+) = indole-3-acetaldehyde + CO2. The catalysed reaction is 3-phenylpyruvate + H(+) = 2-phenylacetaldehyde + CO2. It carries out the reaction 2-oxobutanoate + H(+) = propanal + CO2. It catalyses the reaction 2-oxopentanoate + H(+) = butanal + CO2. The enzyme catalyses 2 acetaldehyde = acetoin. The catalysed reaction is acetaldehyde + pyruvate + H(+) = acetoin + CO2. The protein operates within fermentation; ethanol fermentation. Its pathway is amino-acid degradation; Ehrlich pathway. Its activity is regulated as follows. Allosterically activated by its substrate, pyruvate. In terms of biological role, major of three pyruvate decarboxylases (PDC1, PDC5, PDC6) implicated in the nonoxidative conversion of pyruvate to acetaldehyde and carbon dioxide during alcoholic fermentation. Most of the produced acetaldehyde is subsequently reduced to ethanol, but some is required for cytosolic acetyl-CoA production for biosynthetic pathways. The enzyme is also one of five 2-oxo acid decarboxylases (PDC1, PDC5, PDC6, ARO10, and THI3) able to decarboxylate more complex 2-oxo acids (alpha-ketoacids) than pyruvate, which seem mainly involved in amino acid catabolism. Here the enzyme catalyzes the decarboxylation of amino acids, which, in a first step, have been transaminated to the corresponding 2-oxo acids. In a third step, the resulting aldehydes are reduced to alcohols, collectively referred to as fusel oils or alcohols. Its preferred substrates are the transaminated amino acids derived from threonine (2-oxobutanoate), norvaline (2-oxopentanoate), valine (3-methyl-2-oxobutanoate, also alpha-keto-isovalerate), isoleucine ((3S)-3-methyl-2-oxopentanoate, also alpha-keto-beta-methylvalerate), phenylalanine (phenylpyruvate), and tryptophan (3-(indol-3-yl)pyruvate), whereas transaminated leucine is no substrate. In a side-reaction the carbanionic intermediate (or active aldehyde) generated by decarboxylation or by activation of an aldehyde can react with an aldehyde via condensation (or carboligation) yielding a 2-hydroxy ketone, collectively called acyloins. The protein is Pyruvate decarboxylase isozyme 1 of Saccharomyces cerevisiae (strain ATCC 204508 / S288c) (Baker's yeast).